A 189-amino-acid polypeptide reads, in one-letter code: Protein Flattop (189 aa).

The disordered stretch occupies residues 112 to 189 (EISGKPFDPD…PPPSPCKSTK (78 aa)). A compositionally biased stretch (polar residues) spans 137 to 148 (APNPTIIPSSPV). The segment covering 178-189 (NNPPPSPCKSTK) has biased composition (pro residues).

This sequence belongs to the Flattop family. In terms of assembly, microtubule inner protein component of sperm flagellar doublet microtubules. Interacts with DLG3. Expressed in mono- and multiciliated tissues during planar cell polarity acquisition.

The protein resides in the cytoplasm. Its subcellular location is the cytoskeleton. The protein localises to the cilium basal body. It is found in the cilium axoneme. It localises to the flagellum axoneme. The protein resides in the apical cell membrane. Its function is as follows. Microtubule inner protein (MIP) part of the dynein-decorated doublet microtubules (DMTs) in cilia axoneme. Acts as a regulator of cilium basal body docking and positioning in mono- and multiciliated cells. Regulates basal body docking and cilia formation in multiciliated lung cells. Regulates kinocilium positioning and stereocilia bundle morphogenesis in the inner ear. This Mus musculus (Mouse) protein is Protein Flattop.